We begin with the raw amino-acid sequence, 572 residues long: Oxygen-dependent choline dehydrogenase (572 aa).

An FAD-binding site is contributed by 9–38 (DYVIIGGGSAGSVLGARLSEDKDKNVLVLE). The active-site Proton acceptor is histidine 477.

This sequence belongs to the GMC oxidoreductase family. FAD serves as cofactor.

It catalyses the reaction choline + A = betaine aldehyde + AH2. The enzyme catalyses betaine aldehyde + NAD(+) + H2O = glycine betaine + NADH + 2 H(+). It functions in the pathway amine and polyamine biosynthesis; betaine biosynthesis via choline pathway; betaine aldehyde from choline (cytochrome c reductase route): step 1/1. Functionally, involved in the biosynthesis of the osmoprotectant glycine betaine. Catalyzes the oxidation of choline to betaine aldehyde and betaine aldehyde to glycine betaine at the same rate. The chain is Oxygen-dependent choline dehydrogenase from Staphylococcus epidermidis (strain ATCC 35984 / DSM 28319 / BCRC 17069 / CCUG 31568 / BM 3577 / RP62A).